A 357-amino-acid chain; its full sequence is S-adenosylmethionine:tRNA ribosyltransferase-isomerase (357 aa).

It belongs to the QueA family. Monomer.

The protein resides in the cytoplasm. The enzyme catalyses 7-aminomethyl-7-carbaguanosine(34) in tRNA + S-adenosyl-L-methionine = epoxyqueuosine(34) in tRNA + adenine + L-methionine + 2 H(+). It participates in tRNA modification; tRNA-queuosine biosynthesis. Functionally, transfers and isomerizes the ribose moiety from AdoMet to the 7-aminomethyl group of 7-deazaguanine (preQ1-tRNA) to give epoxyqueuosine (oQ-tRNA). This chain is S-adenosylmethionine:tRNA ribosyltransferase-isomerase, found in Phenylobacterium zucineum (strain HLK1).